The following is a 198-amino-acid chain: Na(+)-translocating NADH-quinone reductase subunit E (198 aa).

6 consecutive transmembrane segments (helical) span residues 11–31, 35–55, 77–97, 109–129, 140–160, and 176–196; these read AVFVENMALAFFLGMCTFLAV, VSTAFGLGIAVTVVLGISVPA, FLNFITFIGVIAAIVQVLEMI, LGIFLPLITVNCAIFGGVSFM, IVYGFGSGIGWMLAIVALAGI, and LGITFITTGLMALGFMSFSGV.

Belongs to the NqrDE/RnfAE family. Composed of six subunits; NqrA, NqrB, NqrC, NqrD, NqrE and NqrF.

It is found in the cell inner membrane. The enzyme catalyses a ubiquinone + n Na(+)(in) + NADH + H(+) = a ubiquinol + n Na(+)(out) + NAD(+). Functionally, NQR complex catalyzes the reduction of ubiquinone-1 to ubiquinol by two successive reactions, coupled with the transport of Na(+) ions from the cytoplasm to the periplasm. NqrA to NqrE are probably involved in the second step, the conversion of ubisemiquinone to ubiquinol. The chain is Na(+)-translocating NADH-quinone reductase subunit E from Yersinia enterocolitica serotype O:8 / biotype 1B (strain NCTC 13174 / 8081).